A 226-amino-acid polypeptide reads, in one-letter code: MSAILKATNINKIYDEGAVSTQVLTGLDLTVTAGERIAIVGTSGSGKSTLLHLLGGLDTPTSGEVWLHGQLLNSMNETERGAMRNKHLGFIYQFHHLLAEFTAIENVAMPLLMRPEVSTAEARQQAIDILNSVGLEHRLAHRPGELSGGERQRVAIARALVTKPSLILADEPTGNLDYDNAQSVFGLLSELQSTMQTALLMVTHDRNLAALADRQLLLRNGHWENY.

The 222-residue stretch at 5–226 (LKATNINKIY…LLRNGHWENY (222 aa)) folds into the ABC transporter domain. Residue 41 to 48 (GTSGSGKS) coordinates ATP.

This sequence belongs to the ABC transporter superfamily. Lipoprotein translocase (TC 3.A.1.125) family. As to quaternary structure, the complex is composed of two ATP-binding proteins (LolD) and two transmembrane proteins (LolC and LolE).

It is found in the cell inner membrane. Its function is as follows. Part of the ABC transporter complex LolCDE involved in the translocation of mature outer membrane-directed lipoproteins, from the inner membrane to the periplasmic chaperone, LolA. Responsible for the formation of the LolA-lipoprotein complex in an ATP-dependent manner. The protein is Lipoprotein-releasing system ATP-binding protein LolD of Psychrobacter cryohalolentis (strain ATCC BAA-1226 / DSM 17306 / VKM B-2378 / K5).